A 232-amino-acid chain; its full sequence is Transcriptional regulatory protein CpxR (232 aa).

Residues 3-115 (KILLVDDDRE…ELVARIRAIL (113 aa)) form the Response regulatory domain. Asp51 bears the 4-aspartylphosphate mark. Residues 131-230 (SPTLEVDALV…LRGRGYLMVS (100 aa)) constitute a DNA-binding region (ompR/PhoB-type).

Post-translationally, phosphorylated by CpxA.

It localises to the cytoplasm. Functionally, member of the two-component regulatory system CpxA/CpxR. This system combats a variety of extracytoplasmic protein-mediated toxicities. It performs this function by increasing the synthesis of the periplasmic protease, DegP as well as that of CpxP protein. The protein is Transcriptional regulatory protein CpxR (cpxR) of Escherichia coli O157:H7.